The chain runs to 86 residues: Large ribosomal subunit protein uL23 (86 aa).

It belongs to the universal ribosomal protein uL23 family. As to quaternary structure, part of the 50S ribosomal subunit. Contacts protein L29.

Its function is as follows. Binds to 23S rRNA. One of the proteins that surrounds the polypeptide exit tunnel on the outside of the ribosome. The chain is Large ribosomal subunit protein uL23 from Methanococcus aeolicus (strain ATCC BAA-1280 / DSM 17508 / OCM 812 / Nankai-3).